A 568-amino-acid polypeptide reads, in one-letter code: Phosphoprotein (568 aa).

Disordered stretches follow at residues Met1–Glu23 and Ser38–Glu320. A compositionally biased stretch (basic and acidic residues) spans Ile7 to Gly20. Residues Asp33 to Thr41 are N0 binding. The segment covering Leu50–Gly59 has biased composition (polar residues). Ser68 is modified (phosphoserine; by host). The segment covering Arg83 to Ala101 has biased composition (basic and acidic residues). Position 125 is a phosphoserine; by host (Ser125). Positions Gly150–Asp168 are enriched in basic and acidic residues. Positions Ala191–Ala206 are enriched in polar residues. 4 positions are modified to phosphoserine; by host: Ser192, Ser249, Ser257, and Ser260. Residues Phe344–Ser411 form a multimerization region. Positions Tyr364–His429 form a coiled coil. Positions Glu412–Thr445 are l protein binding. 2 positions are modified to phosphoserine; by host: Ser447 and Ser449. The segment at Asp479–Asn568 is interaction with the nucleocapsid (N-RNA). The tract at residues Gln496 to Lys516 is disordered.

It belongs to the respirovirus P protein family. Homotetramer. Interacts (via multimerization domain) with polymerase L; this interaction forms the polymerase complex. Interacts (via N-terminus) with N0; this interaction allows P to chaperon N0 before encapsidation and form the N-P complex. Interacts (via C-terminus) with N-RNA template; this interaction positions the polymerase on the template. Post-translationally, phosphorylated by PKC/PRKCZ, and other unknown kinases. Phosphorylation is necessary for viral transcription and replication. The N-terminus contains the majority of phosphorylated sites. Ser-249 is the major site of phosphorylation, but is not necessary for most functions.

Functionally, essential cofactor of the RNA polymerase L that plays a central role in the transcription and replication by forming the polymerase complex with RNA polymerase L and recruiting L to the genomic N-RNA template for RNA synthesis. Also plays a central role in the encapsidation of nascent RNA chains by forming the encapsidation complex with the nucleocapsid protein N (N-P complex). Acts as a chaperone for newly synthesized free N protein, so-called N0, allowing encapsidation of nascent RNA chains during replication. The nucleoprotein protein N prevents excessive phosphorylation of P, which leads to down-regulation of viral transcription/ replication. Participates, together with N, in the formation of viral factories (viroplasms), which are large inclusions in the host cytoplasm where replication takes place. Recruits host PI4KB and remodel the host endoplasmic reticulum membrane to form viral replication factories. The polypeptide is Phosphoprotein (P/V/C) (Sendai virus (strain Z) (SeV)).